Consider the following 1905-residue polypeptide: Alpha-2-macroglobulin (1905 aa).

The signal sequence occupies residues 1–21 (MNKQYFLSLFSTLAVALTLSG). A lipid anchor (N-palmitoyl cysteine) is attached at Cys-22. The S-diacylglycerol cysteine moiety is linked to residue Cys-22. A cross-link (isoglutamyl cysteine thioester (Cys-Gln)) is located at residues 1438 to 1441 (CTEQ).

This sequence belongs to the protease inhibitor I39 (alpha-2-macroglobulin) family. Bacterial alpha-2-macroglobulin subfamily.

The protein localises to the cell membrane. Its function is as follows. Protects the bacterial cell from host peptidases. In Pasteurella multocida (strain Pm70), this protein is Alpha-2-macroglobulin.